Here is a 66-residue protein sequence, read N- to C-terminus: uncharacterized protein (66 aa).

This is an uncharacterized protein from Enterobacteria phage T4 (Bacteriophage T4).